Consider the following 379-residue polypeptide: MTDNRKPEDYTIEMDKLGQNKNYQAPPPPPQPRSSTASSISNNAALSVLAYCGSSILMTVMNKYVLSSDFNLNFFLLCVQSLVCIIAIQLCKACGLITYRDFNLDEARKWFPITLLLIGMIYTGSKALQFLSIPVYTIFKNLTIILIAYGEVLWFGGSVTNLTLFSFGLMVFSSIIAAWADIKHAIESSGDATSKVSTLNAGYIWMLINCLCTSSYVLGMRKRIKLTNFKDFDTMFYNNLLSIPVLIVCSGILEDWSPANVARNFPSADRNGIMFAMILSGLSTVFISYTSAWCVRVTSSTTYSMVGALNKLPIALSGLIFFDAPVTFPSVSAIMVGFVSGIVYAVAKIKQNAKPKVGILPTTNPVSASSQSMRDSLRS.

Over 1-39 (MTDNRKPEDYTIEMDKLGQNKNYQAPPPPPQPRSSTASS) the chain is Cytoplasmic. The disordered stretch occupies residues 17-38 (LGQNKNYQAPPPPPQPRSSTAS). Residues 40 to 60 (ISNNAALSVLAYCGSSILMTV) form a helical membrane-spanning segment. At 61 to 69 (MNKYVLSSD) the chain is on the lumenal side. A helical transmembrane segment spans residues 70–90 (FNLNFFLLCVQSLVCIIAIQL). The Cytoplasmic segment spans residues 91 to 110 (CKACGLITYRDFNLDEARKW). Residues 111 to 133 (FPITLLLIGMIYTGSKALQFLSI) form a helical membrane-spanning segment. The Lumenal portion of the chain corresponds to 134 to 136 (PVY). A helical membrane pass occupies residues 137–156 (TIFKNLTIILIAYGEVLWFG). Over 157-162 (GSVTNL) the chain is Cytoplasmic. The chain crosses the membrane as a helical span at residues 163–182 (TLFSFGLMVFSSIIAAWADI). Residues 183–198 (KHAIESSGDATSKVST) lie on the Lumenal side of the membrane. The chain crosses the membrane as a helical span at residues 199–219 (LNAGYIWMLINCLCTSSYVLG). Residues 220 to 233 (MRKRIKLTNFKDFD) lie on the Cytoplasmic side of the membrane. A helical transmembrane segment spans residues 234-254 (TMFYNNLLSIPVLIVCSGILE). The Lumenal segment spans residues 255–272 (DWSPANVARNFPSADRNG). Residues 273–293 (IMFAMILSGLSTVFISYTSAW) form a helical membrane-spanning segment. Topologically, residues 294–301 (CVRVTSST) are cytoplasmic. A helical transmembrane segment spans residues 302 to 322 (TYSMVGALNKLPIALSGLIFF). Residues 323–325 (DAP) lie on the Lumenal side of the membrane. Residues 326–346 (VTFPSVSAIMVGFVSGIVYAV) form a helical membrane-spanning segment. Over 347 to 379 (AKIKQNAKPKVGILPTTNPVSASSQSMRDSLRS) the chain is Cytoplasmic.

Belongs to the TPT transporter family. SLC35D subfamily. In terms of assembly, homooligomer.

It is found in the golgi apparatus membrane. It localises to the cytoplasmic vesicle membrane. The protein resides in the endoplasmic reticulum membrane. In terms of biological role, involved in the import of GDP-mannose from the cytoplasm into the Golgi lumen. This Emericella nidulans (strain FGSC A4 / ATCC 38163 / CBS 112.46 / NRRL 194 / M139) (Aspergillus nidulans) protein is GDP-mannose transporter 1 (gmt1).